Consider the following 73-residue polypeptide: Guanine nucleotide-binding protein G(I)/G(S)/G(O) subunit gamma-11 (73 aa).

Residues 51 to 73 (DPLVKGIPEDKNPFKEKGSCVIS) form a disordered region. Cysteine 70 is modified (cysteine methyl ester). Residue cysteine 70 is the site of S-farnesyl cysteine attachment. Residues 71-73 (VIS) constitute a propeptide, removed in mature form.

The protein belongs to the G protein gamma family. G proteins are composed of 3 units, alpha, beta and gamma. Interacts with beta-1 and beta-3, but not with beta-2. In terms of tissue distribution, abundantly expressed in all tissues tested except for brain.

It is found in the cell membrane. Its function is as follows. Guanine nucleotide-binding proteins (G proteins) are involved as a modulator or transducer in various transmembrane signaling systems. The beta and gamma chains are required for the GTPase activity, for replacement of GDP by GTP, and for G protein-effector interaction. The polypeptide is Guanine nucleotide-binding protein G(I)/G(S)/G(O) subunit gamma-11 (GNG11) (Homo sapiens (Human)).